The following is a 627-amino-acid chain: WPP domain-interacting tail-anchored protein 2 (627 aa).

3 coiled-coil regions span residues 81–152, 188–218, and 312–542; these read CGIL…RRTL, LEKSLSRELELEKKLMEFQQNEEQLKLKLHY, and TLRE…KILR. Positions 577-597 are disordered; it reads SLQEDERTREEPEKQSVSEKS. Residues 580 to 597 are compositionally biased toward basic and acidic residues; the sequence is EDERTREEPEKQSVSEKS. The helical transmembrane segment at 606–626 threads the bilayer; sequence LKHILVVALVFVLFCSFFGVT.

As to quaternary structure, component of Ran complexes at least composed of WIT1 or WIT2, RANGAP1 or RANGAP2, and WIP1 or WIP2 or WIP3. Interacts with KAKU1. Core component of the LINC complex which is composed of inner nuclear membrane SUN domain-containing proteins coupled to outer nuclear membrane WIP and WIT proteins. The LINC complex also involves nucleoskeletal proteins CRWN/LINC and possibly KAKU4 and the cytoskeletal myosin KAKU1. Interacts with WIP1, WIP2 and WIP3. Ubiquitous.

The protein resides in the membrane. Together with WIT1, required for the nuclear envelope docking of RANGAP proteins in root tips. Plays a role in nuclear shape determination. As component of the SUN-WIP-WIT2-KAKU1 complex, mediates the transfer of cytoplasmic forces to the nuclear envelope (NE), leading to nuclear shape changes. The polypeptide is WPP domain-interacting tail-anchored protein 2 (WIT2) (Arabidopsis thaliana (Mouse-ear cress)).